A 235-amino-acid polypeptide reads, in one-letter code: Thiamine-phosphate synthase (235 aa).

4-amino-2-methyl-5-(diphosphooxymethyl)pyrimidine is bound by residues 50 to 54 (QLRDK) and N91. Residues D92 and D111 each contribute to the Mg(2+) site. A 4-amino-2-methyl-5-(diphosphooxymethyl)pyrimidine-binding site is contributed by S130. 160–162 (TPT) is a 2-[(2R,5Z)-2-carboxy-4-methylthiazol-5(2H)-ylidene]ethyl phosphate binding site. K163 is a 4-amino-2-methyl-5-(diphosphooxymethyl)pyrimidine binding site. G191 contributes to the 2-[(2R,5Z)-2-carboxy-4-methylthiazol-5(2H)-ylidene]ethyl phosphate binding site.

Belongs to the thiamine-phosphate synthase family. Mg(2+) serves as cofactor.

It carries out the reaction 2-[(2R,5Z)-2-carboxy-4-methylthiazol-5(2H)-ylidene]ethyl phosphate + 4-amino-2-methyl-5-(diphosphooxymethyl)pyrimidine + 2 H(+) = thiamine phosphate + CO2 + diphosphate. The enzyme catalyses 2-(2-carboxy-4-methylthiazol-5-yl)ethyl phosphate + 4-amino-2-methyl-5-(diphosphooxymethyl)pyrimidine + 2 H(+) = thiamine phosphate + CO2 + diphosphate. It catalyses the reaction 4-methyl-5-(2-phosphooxyethyl)-thiazole + 4-amino-2-methyl-5-(diphosphooxymethyl)pyrimidine + H(+) = thiamine phosphate + diphosphate. It functions in the pathway cofactor biosynthesis; thiamine diphosphate biosynthesis; thiamine phosphate from 4-amino-2-methyl-5-diphosphomethylpyrimidine and 4-methyl-5-(2-phosphoethyl)-thiazole: step 1/1. Functionally, condenses 4-methyl-5-(beta-hydroxyethyl)thiazole monophosphate (THZ-P) and 2-methyl-4-amino-5-hydroxymethyl pyrimidine pyrophosphate (HMP-PP) to form thiamine monophosphate (TMP). The protein is Thiamine-phosphate synthase of Mycobacterium leprae (strain TN).